We begin with the raw amino-acid sequence, 384 residues long: Probable intron-encoded endonuclease Cox1-I1b (384 aa).

This sequence belongs to the LAGLIDADG endonuclease family.

The protein resides in the mitochondrion. Its function is as follows. Probable mitochondrial DNA endonuclease involved in intron homing. The chain is Probable intron-encoded endonuclease Cox1-I1b (cox1-I1b) from Schizosaccharomyces pombe (strain 972 / ATCC 24843) (Fission yeast).